The sequence spans 819 residues: Nuclear pore complex protein Nup93 (819 aa).

Residue threonine 49 is modified to Phosphothreonine. Phosphoserine occurs at positions 52, 66, 72, 75, 80, 430, and 767.

This sequence belongs to the nucleoporin interacting component (NIC) family. Part of the nuclear pore complex (NPC). Component of the p62 complex, a complex composed of NUP62 and NUP54. Forms a complex with NUP35, NUP155, NUP205 and lamin B; the interaction with NUP35 is direct. Does not interact with TPR. Interacts with SMAD4 and IPO7; translocates SMAD4 to the nucleus through the NPC upon BMP7 stimulation resulting in activation of SMAD4 signaling.

It localises to the nucleus membrane. The protein resides in the nucleus. It is found in the nuclear pore complex. The protein localises to the nucleus envelope. Its function is as follows. Plays a role in the nuclear pore complex (NPC) assembly and/or maintenance. May anchor nucleoporins, but not NUP153 and TPR, to the NPC. During renal development, regulates podocyte migration and proliferation through SMAD4 signaling. The sequence is that of Nuclear pore complex protein Nup93 (Nup93) from Rattus norvegicus (Rat).